Consider the following 321-residue polypeptide: Collectin-43 (321 aa).

The N-terminal stretch at 1–20 (MLPLPLSILLLLTQSQSFLG) is a signal peptide. The segment at 43-163 (PADSLRGHDG…GEKGARGETS (121 aa)) is disordered. The span at 47–65 (LRGHDGRDGKEGPQGEKGD) shows a compositional bias: basic and acidic residues. In terms of domain architecture, Collagen-like spans 49 to 162 (GHDGRDGKEG…PGEKGARGET (114 aa)). 2 stretches are compositionally biased toward gly residues: residues 100–109 (GPEGGVGAPG) and 124–133 (GTPGPGGAIG). The segment covering 147-159 (KGDRGDPGEKGAR) has biased composition (basic and acidic residues). The region spanning 222 to 321 (QLCREAKGQL…REERLVICEF (100 aa)) is the C-type lectin domain. 2 disulfide bridges follow: C224/C319 and C297/C311.

It belongs to the SFTPD family. Oligomeric complex of 4 set of homotrimers. Post-translationally, hydroxylated. Liver specific.

It is found in the secreted. In terms of biological role, lectin that binds to various sugars: mannose = ManNAc &gt; fucose &gt; GlcNAc &gt; glucose = maltose &gt; galactose &gt; lactose &gt; GalNAc. Could play a role in immune defense. This is Collectin-43 (CL43) from Bos taurus (Bovine).